The following is a 204-amino-acid chain: Urease accessory protein UreG (204 aa).

13–20 (GPVGSGKT) contributes to the GTP binding site.

It belongs to the SIMIBI class G3E GTPase family. UreG subfamily. Homodimer. UreD, UreF and UreG form a complex that acts as a GTP-hydrolysis-dependent molecular chaperone, activating the urease apoprotein by helping to assemble the nickel containing metallocenter of UreC. The UreE protein probably delivers the nickel.

The protein localises to the cytoplasm. In terms of biological role, facilitates the functional incorporation of the urease nickel metallocenter. This process requires GTP hydrolysis, probably effectuated by UreG. The protein is Urease accessory protein UreG of Acinetobacter baylyi (strain ATCC 33305 / BD413 / ADP1).